We begin with the raw amino-acid sequence, 325 residues long: Tetraacyldisaccharide 4'-kinase (325 aa).

Residue 55 to 62 (TAGGNGKT) coordinates ATP.

Belongs to the LpxK family.

The enzyme catalyses a lipid A disaccharide + ATP = a lipid IVA + ADP + H(+). The protein operates within glycolipid biosynthesis; lipid IV(A) biosynthesis; lipid IV(A) from (3R)-3-hydroxytetradecanoyl-[acyl-carrier-protein] and UDP-N-acetyl-alpha-D-glucosamine: step 6/6. Functionally, transfers the gamma-phosphate of ATP to the 4'-position of a tetraacyldisaccharide 1-phosphate intermediate (termed DS-1-P) to form tetraacyldisaccharide 1,4'-bis-phosphate (lipid IVA). The chain is Tetraacyldisaccharide 4'-kinase from Salmonella dublin (strain CT_02021853).